Consider the following 163-residue polypeptide: Oocyte-secreted protein 1 (163 aa).

An N-terminal signal peptide occupies residues 1 to 21; it reads MKPSSGLRGLLVLFSLTWTCA.

This sequence belongs to the PLAC1 family. In terms of tissue distribution, oocyte-specific.

It is found in the secreted. Functionally, may be involved in cell differentiation. The polypeptide is Oocyte-secreted protein 1 (OOSP1) (Bos taurus (Bovine)).